A 215-amino-acid polypeptide reads, in one-letter code: UPF0502 protein YceH (215 aa).

K80 bears the N6-acetyllysine mark.

Belongs to the UPF0502 family.

In Escherichia coli O7:K1 (strain IAI39 / ExPEC), this protein is UPF0502 protein YceH.